A 505-amino-acid polypeptide reads, in one-letter code: ATP synthase subunit beta, mitochondrial (505 aa).

The transit peptide at 1–31 directs the protein to the mitochondrion; it reads MFALRAASKADKNLLPFLGQLSRSHAAKAAK. 183 to 190 is a binding site for ATP; sequence GGAGVGKT.

The protein belongs to the ATPase alpha/beta chains family. F-type ATPases have 2 components, CF(1) - the catalytic core - and CF(0) - the membrane proton channel. CF(1) has five subunits: alpha(3), beta(3), gamma(1), delta(1), epsilon(1). CF(0) has three main subunits: a, b and c.

It localises to the mitochondrion. Its subcellular location is the mitochondrion inner membrane. The enzyme catalyses ATP + H2O + 4 H(+)(in) = ADP + phosphate + 5 H(+)(out). Mitochondrial membrane ATP synthase (F(1)F(0) ATP synthase or Complex V) produces ATP from ADP in the presence of a proton gradient across the membrane which is generated by electron transport complexes of the respiratory chain. F-type ATPases consist of two structural domains, F(1) - containing the extramembraneous catalytic core, and F(0) - containing the membrane proton channel, linked together by a central stalk and a peripheral stalk. During catalysis, ATP synthesis in the catalytic domain of F(1) is coupled via a rotary mechanism of the central stalk subunits to proton translocation. Subunits alpha and beta form the catalytic core in F(1). Rotation of the central stalk against the surrounding alpha(3)beta(3) subunits leads to hydrolysis of ATP in three separate catalytic sites on the beta subunits. The sequence is that of ATP synthase subunit beta, mitochondrial from Drosophila melanogaster (Fruit fly).